We begin with the raw amino-acid sequence, 116 residues long: Large ribosomal subunit protein bL19 (116 aa).

It belongs to the bacterial ribosomal protein bL19 family.

Functionally, this protein is located at the 30S-50S ribosomal subunit interface and may play a role in the structure and function of the aminoacyl-tRNA binding site. The chain is Large ribosomal subunit protein bL19 from Chloroflexus aggregans (strain MD-66 / DSM 9485).